Consider the following 527-residue polypeptide: Peptide chain release factor 3 (527 aa).

Residues 9-277 (AKRRTFAIIS…CIVDWAPQPL (269 aa)) enclose the tr-type G domain. GTP contacts are provided by residues 18-25 (SHPDAGKT), 86-90 (DTPGH), and 140-143 (NKLD).

Belongs to the TRAFAC class translation factor GTPase superfamily. Classic translation factor GTPase family. PrfC subfamily.

It is found in the cytoplasm. Functionally, increases the formation of ribosomal termination complexes and stimulates activities of RF-1 and RF-2. It binds guanine nucleotides and has strong preference for UGA stop codons. It may interact directly with the ribosome. The stimulation of RF-1 and RF-2 is significantly reduced by GTP and GDP, but not by GMP. The sequence is that of Peptide chain release factor 3 from Pseudomonas paraeruginosa (strain DSM 24068 / PA7) (Pseudomonas aeruginosa (strain PA7)).